The chain runs to 435 residues: MASLQALRGTRDILPPETQVWQWIEQTAREILGRAAVQEVRTPIFEQTALFERGIGEATDVVGKEMYSFRDRGDRSLTLRPEGTAGTVRAYIEHGLASQGGVQRLWYTGPMFRYERPQAGRQRQFHQLGLELLGTADARADAEAIALATQILQALGLKNLRLDLNSVGDASDRAAYRQALVDYLTPYAADLDPDSRDRLERNPLRILDSKDERTQAIVAEAPSLHDYLSERSRQLFEQVQQLLTHLGIDYRLEPKLVRGLDYYTHTAFEIISSDLGAQATVCGGGRYDGLVSQLGGPETPAVGWAMGLERLVLLLQQGQAVPPATLDFYLVSRGAIAEGQALILAQKLRSAGFGVELDLSGSAFGKQFKRADRSGAIACLVLGDAEAEQGQVNLKWLQSGEQQTLDQSELLQDSDHWRSRLQAARTVSPVEVAPL.

Belongs to the class-II aminoacyl-tRNA synthetase family. Homodimer.

Its subcellular location is the cytoplasm. The catalysed reaction is tRNA(His) + L-histidine + ATP = L-histidyl-tRNA(His) + AMP + diphosphate + H(+). This chain is Histidine--tRNA ligase, found in Synechococcus elongatus (strain ATCC 33912 / PCC 7942 / FACHB-805) (Anacystis nidulans R2).